Reading from the N-terminus, the 390-residue chain is Transcription factor bHLH76 (390 aa).

The tract at residues 147–217 (NVSEDSQSSG…SEKQPSDSLK (71 aa)) is disordered. A compositionally biased stretch (basic and acidic residues) spans 207-217 (NSEKQPSDSLK). The bHLH domain maps to 229-279 (QATNSHSLAERVRREKISERMKFLQDLVPGCDKVTGKAVMLDEIINYVQSL).

In terms of assembly, homodimer. Interacts with IBH1. Binds reversibly to CRY2 after blue light illumination. In terms of tissue distribution, expressed constitutively in roots, leaves, stems, and flowers.

It is found in the nucleus. Its function is as follows. Transcriptional activator involved in cell elongation. Regulates the expression of a subset of genes involved in cell expansion by binding to the G-box motif. Binds to chromatin DNA of the FT gene and promotes its expression, and thus triggers flowering in response to blue light. This Arabidopsis thaliana (Mouse-ear cress) protein is Transcription factor bHLH76 (BHLH76).